Consider the following 386-residue polypeptide: Cell division protein FtsZ (386 aa).

GTP is bound by residues 20-24 (GGGGN), 107-109 (GTG), E138, R142, and N186. The tract at residues 350-377 (LNQEQKTAAKAVNEQNAQGSKEPDYLDI) is disordered.

This sequence belongs to the FtsZ family. Homodimer. Polymerizes to form a dynamic ring structure in a strictly GTP-dependent manner. Interacts directly with several other division proteins.

The protein localises to the cytoplasm. In terms of biological role, essential cell division protein that forms a contractile ring structure (Z ring) at the future cell division site. The regulation of the ring assembly controls the timing and the location of cell division. One of the functions of the FtsZ ring is to recruit other cell division proteins to the septum to produce a new cell wall between the dividing cells. Binds GTP and shows GTPase activity. In Sodalis glossinidius, this protein is Cell division protein FtsZ.